A 245-amino-acid polypeptide reads, in one-letter code: MNPKSNPDTIFSAPIDKIGDFTFDERVAEVFPDMIQRSVPGYSNIISAIGMLAERFVKPHSNIYDLGCSLGAATLSMRRHIKQEGCKIIAVDNSPAMVERCKLHVNAYRSDTPVTVVEADIRNIEIENASVVVLNFTLQFLSPEDRYALLEKIYAGLRPGGILILSEKFVFEDEVSNELLIDLHHDFKRANGYSELEISQKRSAIENVMRPDSKKDHKERFAKIGFSSYDVWFQCFNFGSMFAIK.

S-adenosyl-L-methionine-binding positions include Y42, 67–69 (GCS), 92–93 (DN), 120–121 (DI), N135, and R202.

Belongs to the class I-like SAM-binding methyltransferase superfamily. Cx-SAM synthase family. As to quaternary structure, homodimer.

The enzyme catalyses prephenate + S-adenosyl-L-methionine = carboxy-S-adenosyl-L-methionine + 3-phenylpyruvate + H2O. In terms of biological role, catalyzes the conversion of S-adenosyl-L-methionine (SAM) to carboxy-S-adenosyl-L-methionine (Cx-SAM). The sequence is that of Carboxy-S-adenosyl-L-methionine synthase from Vibrio parahaemolyticus serotype O3:K6 (strain RIMD 2210633).